The sequence spans 157 residues: MSRKNKKIKKKIFIDTRYNSRIVAKFANRMMYDGKKSISESILYSSIDLLADKLEDSDKMAVFYKALDNIKPLVEVRSRRVGGATYQVPVEVREERREALAMKWIIFAARKSSGRSMKEKLSNELLNAYNSTGAAFKKKEDTHRMAEANKAFTHYRW.

It belongs to the universal ribosomal protein uS7 family. Part of the 30S ribosomal subunit. Contacts proteins S9 and S11.

Its function is as follows. One of the primary rRNA binding proteins, it binds directly to 16S rRNA where it nucleates assembly of the head domain of the 30S subunit. Is located at the subunit interface close to the decoding center, probably blocks exit of the E-site tRNA. This Borrelia garinii subsp. bavariensis (strain ATCC BAA-2496 / DSM 23469 / PBi) (Borreliella bavariensis) protein is Small ribosomal subunit protein uS7.